The following is a 611-amino-acid chain: Rop guanine nucleotide exchange factor 5 (611 aa).

The disordered stretch occupies residues 1–62 (MENLVKSCAG…PPPPPSQILG (62 aa)). The span at 34-51 (STSGASYESSSTTTVASS) shows a compositional bias: low complexity. The PRONE domain occupies 93-477 (FKAKEMNSAD…DLTKQSDDNN (385 aa)). Disordered stretches follow at residues 513 to 541 (TTPGFSPSMISPKKGERRTPYSSKDTNKI) and 588 to 611 (DVEEEKKRNSTSVHQKGPPKYTVS). Residues 525–541 (KKGERRTPYSSKDTNKI) are compositionally biased toward basic and acidic residues.

Its function is as follows. Guanine-nucleotide exchange factor (GEF) that acts as an activator of Rop (Rho of plants) GTPases by promoting the exchange of GDP for GTP. The chain is Rop guanine nucleotide exchange factor 5 (ROPGEF5) from Arabidopsis thaliana (Mouse-ear cress).